A 308-amino-acid chain; its full sequence is Homoserine O-acetyltransferase (308 aa).

Cys-142 acts as the Acyl-thioester intermediate in catalysis. Substrate contacts are provided by Lys-163 and Ser-192. The active-site Proton acceptor is the His-235. The active site involves Glu-237. Arg-249 lines the substrate pocket.

The protein belongs to the MetA family.

It localises to the cytoplasm. It catalyses the reaction L-homoserine + acetyl-CoA = O-acetyl-L-homoserine + CoA. It participates in amino-acid biosynthesis; L-methionine biosynthesis via de novo pathway; O-acetyl-L-homoserine from L-homoserine: step 1/1. In terms of biological role, transfers an acetyl group from acetyl-CoA to L-homoserine, forming acetyl-L-homoserine. This Rhizobium rhizogenes (strain K84 / ATCC BAA-868) (Agrobacterium radiobacter) protein is Homoserine O-acetyltransferase.